The chain runs to 271 residues: Undecaprenyl-diphosphatase (271 aa).

8 consecutive transmembrane segments (helical) span residues 5–25, 45–65, 86–106, 114–134, 149–169, 189–209, 226–246, and 251–271; these read YALFVAFVLGIVEGLTEFLPV, AATFEVVIQMGSILAVVAVFW, TLSLVHIILGMLPAVIIGLGI, LFGPETVMYALVAGGILLIIA, ISYKQAFGIGLFQCLALWPGF, AAEFSFILAVPMMVAASGLDL, VGFITAFVVAMIAIKTFLALI, and FIPFAIYRFIVAFAVYLVFVA.

The protein belongs to the UppP family.

The protein localises to the cell inner membrane. It carries out the reaction di-trans,octa-cis-undecaprenyl diphosphate + H2O = di-trans,octa-cis-undecaprenyl phosphate + phosphate + H(+). Its function is as follows. Catalyzes the dephosphorylation of undecaprenyl diphosphate (UPP). Confers resistance to bacitracin. The protein is Undecaprenyl-diphosphatase of Aeromonas salmonicida (strain A449).